The chain runs to 517 residues: GMP synthase [glutamine-hydrolyzing] (517 aa).

A Glutamine amidotransferase type-1 domain is found at 9-202 (KIIVLDYGSQ…AFNVCKAKGD (194 aa)). The active-site Nucleophile is the C86. Residues H176 and E178 contribute to the active site. Positions 203–392 (WSMDSFIDME…LGMPDEIVWR (190 aa)) constitute a GMPS ATP-PPase domain. 230–236 (SGGVDSS) provides a ligand contact to ATP.

As to quaternary structure, homodimer.

The catalysed reaction is XMP + L-glutamine + ATP + H2O = GMP + L-glutamate + AMP + diphosphate + 2 H(+). The protein operates within purine metabolism; GMP biosynthesis; GMP from XMP (L-Gln route): step 1/1. Functionally, catalyzes the synthesis of GMP from XMP. The sequence is that of GMP synthase [glutamine-hydrolyzing] from Streptococcus mutans serotype c (strain ATCC 700610 / UA159).